The following is a 253-amino-acid chain: UPF0246 protein Swit_4565 (253 aa).

It belongs to the UPF0246 family.

This is UPF0246 protein Swit_4565 from Rhizorhabdus wittichii (strain DSM 6014 / CCUG 31198 / JCM 15750 / NBRC 105917 / EY 4224 / RW1) (Sphingomonas wittichii).